We begin with the raw amino-acid sequence, 668 residues long: tRNA 5-methylaminomethyl-2-thiouridine biosynthesis bifunctional protein MnmC (668 aa).

Residues 1–245 (MKHYSIQPAN…KREMLCGVME (245 aa)) are tRNA (mnm(5)s(2)U34)-methyltransferase. The segment at 270–668 (IGGGIASALL…LLKGKAVKAG (399 aa)) is FAD-dependent cmnm(5)s(2)U34 oxidoreductase.

The protein in the N-terminal section; belongs to the methyltransferase superfamily. tRNA (mnm(5)s(2)U34)-methyltransferase family. It in the C-terminal section; belongs to the DAO family. FAD serves as cofactor.

It is found in the cytoplasm. It catalyses the reaction 5-aminomethyl-2-thiouridine(34) in tRNA + S-adenosyl-L-methionine = 5-methylaminomethyl-2-thiouridine(34) in tRNA + S-adenosyl-L-homocysteine + H(+). In terms of biological role, catalyzes the last two steps in the biosynthesis of 5-methylaminomethyl-2-thiouridine (mnm(5)s(2)U) at the wobble position (U34) in tRNA. Catalyzes the FAD-dependent demodification of cmnm(5)s(2)U34 to nm(5)s(2)U34, followed by the transfer of a methyl group from S-adenosyl-L-methionine to nm(5)s(2)U34, to form mnm(5)s(2)U34. This is tRNA 5-methylaminomethyl-2-thiouridine biosynthesis bifunctional protein MnmC from Shigella flexneri serotype 5b (strain 8401).